A 240-amino-acid chain; its full sequence is Ubiquinone biosynthesis O-methyltransferase (240 aa).

The S-adenosyl-L-methionine site is built by R44, G64, D85, and M129.

This sequence belongs to the methyltransferase superfamily. UbiG/COQ3 family.

The catalysed reaction is a 3-demethylubiquinol + S-adenosyl-L-methionine = a ubiquinol + S-adenosyl-L-homocysteine + H(+). The enzyme catalyses a 3-(all-trans-polyprenyl)benzene-1,2-diol + S-adenosyl-L-methionine = a 2-methoxy-6-(all-trans-polyprenyl)phenol + S-adenosyl-L-homocysteine + H(+). It functions in the pathway cofactor biosynthesis; ubiquinone biosynthesis. Functionally, O-methyltransferase that catalyzes the 2 O-methylation steps in the ubiquinone biosynthetic pathway. In Escherichia coli (strain UTI89 / UPEC), this protein is Ubiquinone biosynthesis O-methyltransferase.